Reading from the N-terminus, the 293-residue chain is Elongation factor Ts (293 aa).

The involved in Mg(2+) ion dislocation from EF-Tu stretch occupies residues 80 to 83 (TDFV).

The protein belongs to the EF-Ts family.

It is found in the cytoplasm. In terms of biological role, associates with the EF-Tu.GDP complex and induces the exchange of GDP to GTP. It remains bound to the aminoacyl-tRNA.EF-Tu.GTP complex up to the GTP hydrolysis stage on the ribosome. In Burkholderia vietnamiensis (strain G4 / LMG 22486) (Burkholderia cepacia (strain R1808)), this protein is Elongation factor Ts.